Reading from the N-terminus, the 508-residue chain is PTS system mannitol-specific EIICB component (508 aa).

Topologically, residues 1-30 are cytoplasmic; the sequence is MSQTETQENKGLGRKVQAFGSFLSSMIMPN. In terms of domain architecture, PTS EIIC type-2 spans 19–351; it reads FGSFLSSMIM…LKFTKEPEED (333 aa). A helical transmembrane segment spans residues 31–52; the sequence is IGAFIAWGFIAAIFIDGGWWPN. The Extracellular portion of the chain corresponds to 53–56; that stretch reads KDLS. A helical membrane pass occupies residues 57–77; sequence ELAGPMISYLIPLLIAYSGGR. At 78–141 the chain is on the cytoplasmic side; sequence LIHEMRGGII…QGFEMLFNNF (64 aa). Residues 142–163 form a helical membrane-spanning segment; that stretch reads SAGILGFIMTIVGFKILAPIME. The Extracellular segment spans residues 164–172; that stretch reads FIMHILSLA. The helical transmembrane segment at 173-193 threads the bilayer; that stretch reads VEALVHAHLLPLVSIIVEPAK. Residues 194–280 lie on the Cytoplasmic side of the membrane; sequence IVFLNNAINH…VLMRPLLFIA (87 aa). The chain crosses the membrane as a helical span at residues 281–300; that stretch reads VILGGMTGVATYSLLDFGFK. Topologically, residues 301 to 320 are extracellular; sequence SPASPGSFIVYMLNAPKGEF. Residues 321–342 traverse the membrane as a helical segment; that stretch reads LHMVLGVLLAAIVSFIVAALIL. At 343–508 the chain is on the cytoplasmic side; it reads KFTKEPEEDL…RYDELLENLK (166 aa). Residues 355-400 are disordered; the sequence is ATEKMEASKGKKSSVSSKLKGNEDNNATSTTASTSTSENNEEQSEE. Positions 367–392 are enriched in low complexity; it reads SSVSSKLKGNEDNNATSTTASTSTSE. One can recognise a PTS EIIB type-2 domain in the interval 420–508; the sequence is NHVIFACDAG…RYDELLENLK (89 aa). The Phosphocysteine intermediate; for EIIB activity role is filled by Cys-426. Cys-426 carries the phosphocysteine; by EIIA modification.

In terms of assembly, homodimer.

The protein localises to the cell membrane. The catalysed reaction is D-mannitol(out) + N(pros)-phospho-L-histidyl-[protein] = D-mannitol 1-phosphate(in) + L-histidyl-[protein]. The phosphoenolpyruvate-dependent sugar phosphotransferase system (sugar PTS), a major carbohydrate active transport system, catalyzes the phosphorylation of incoming sugar substrates concomitantly with their translocation across the cell membrane. The enzyme II CmtAB PTS system is involved in D-mannitol transport. This Staphylococcus saprophyticus subsp. saprophyticus (strain ATCC 15305 / DSM 20229 / NCIMB 8711 / NCTC 7292 / S-41) protein is PTS system mannitol-specific EIICB component (mtlA).